A 552-amino-acid chain; its full sequence is Protein psiB (552 aa).

Residues 1–18 form the signal peptide; that stretch reads MKLLSVLITFLLATVIYS. Asn-60 is a glycosylation site (N-linked (GlcNAc...) asparagine). The PA14 domain occupies 114–255; that stretch reads TYDTTRNIYV…EDYCGVCQGD (142 aa). Residues Asn-281, Asn-313, Asn-340, Asn-365, Asn-446, Asn-472, and Asn-521 are each glycosylated (N-linked (GlcNAc...) asparagine).

Belongs to the prespore-cell-inducing factor family.

Its subcellular location is the secreted. The sequence is that of Protein psiB (psiB) from Dictyostelium discoideum (Social amoeba).